Reading from the N-terminus, the 251-residue chain is MSDYVYNLVKKHHSVRKFKNKPLSEDVVKKLVEAGQSASTSSFLQAYSIIGIDDEKIKENLREVSGQPYVVENGYLFVFVIDYYRHHLVDQHAETDMENAYGSTEGLLVGAIDAALVAENIAVTAEDMGYGIVFLGSLRNDVERVREILDLPDYVFPVFGMAVGEPADDENGAAKPRLPFDHVFHHNKYHADKETQYAQMADYDQTISEYYDQRTNGNRKETWSQQIEMFLGNKARLDMLEQLQKSGLIQR.

This sequence belongs to the flavin oxidoreductase frp family. FMN is required as a cofactor.

In terms of biological role, reduces FMN, organic nitro compounds and disulfide DTNB. Involved in maintenance of the cellular redox state and the disulfide stress response. The sequence is that of NADPH-dependent oxidoreductase (nfrA) from Staphylococcus aureus (strain Mu50 / ATCC 700699).